The primary structure comprises 79 residues: Small ribosomal subunit protein bS20 (79 aa).

Belongs to the bacterial ribosomal protein bS20 family.

Its function is as follows. Binds directly to 16S ribosomal RNA. The polypeptide is Small ribosomal subunit protein bS20 (Karelsulcia muelleri (strain GWSS) (Sulcia muelleri)).